A 248-amino-acid polypeptide reads, in one-letter code: DNA polymerase sliding clamp (248 aa).

The protein belongs to the PCNA family. Homotrimer. The subunits circularize to form a toroid; DNA passes through its center. Replication factor C (RFC) is required to load the toroid on the DNA.

Functionally, sliding clamp subunit that acts as a moving platform for DNA processing. Responsible for tethering the catalytic subunit of DNA polymerase and other proteins to DNA during high-speed replication. In Cenarchaeum symbiosum (strain A), this protein is DNA polymerase sliding clamp.